Reading from the N-terminus, the 491-residue chain is Lysine--tRNA ligase (491 aa).

The Mg(2+) site is built by E399 and E406.

Belongs to the class-II aminoacyl-tRNA synthetase family. In terms of assembly, homodimer. The cofactor is Mg(2+).

It localises to the cytoplasm. It carries out the reaction tRNA(Lys) + L-lysine + ATP = L-lysyl-tRNA(Lys) + AMP + diphosphate. The sequence is that of Lysine--tRNA ligase from Chloroflexus aurantiacus (strain ATCC 29366 / DSM 635 / J-10-fl).